A 631-amino-acid polypeptide reads, in one-letter code: MITDLRPPAMEPAELIWQDGVPESARFGDVYFSRDDGLAETRYVFIERNGLPGRFAELDRNSHFVIAETGFGTGLNFLATWAEWLAQRPDDQDHAILHFISVERYPLALADLEKALESWPGLQPLARELIDNYPPLIKGTHRLVLGGGAIRLTLCFGDVLDAWNELEFVADAWFLDGFAPSLNPDMWLEKAIHQIRAHSQPGTTLATFTSVGRVRRALADEGFEMAKVPGFGRKREMLTGRLPTSEDVSAPTVGTDPIVIIGAGIAGAALARNLAERGVPVVLADQASGPGAGASGNDQGALYVKLGVEYNDQTELAATALSFSQRFYQRWQGEFWHPSGLLQLAATDQEQDRQRRFLERNTYPENMLAAVTAAEASRIAGMPVQCEGLWFPSSGWIQPARACQTLIDHPHIRTVFDFNVDTLRYVDNHWVIKASDGRSLRATKVVVAAGHESGSLAPVPDGQSLRLKPIRGQVTRLPADDCQLPDVVVCGTKYLNPAYDGSAITGATFDLRDDNPEPTPEGHQENLDQLRELLPSVNISKHIQAEHLEGRVAFRCATHDYQPVAGPCPDNNEISRTGVYLLTGLGSKGLVWAPLLAEYLADRICQQPACLNTRLARRVETGRLYRNQLTV.

The interval 1–243 (MITDLRPPAM…KREMLTGRLP (243 aa)) is tRNA (mnm(5)s(2)U34)-methyltransferase. An FAD-dependent cmnm(5)s(2)U34 oxidoreductase region spans residues 261-631 (IGAGIAGAAL…GRLYRNQLTV (371 aa)).

It in the N-terminal section; belongs to the methyltransferase superfamily. tRNA (mnm(5)s(2)U34)-methyltransferase family. In the C-terminal section; belongs to the DAO family. The cofactor is FAD.

The protein resides in the cytoplasm. The catalysed reaction is 5-aminomethyl-2-thiouridine(34) in tRNA + S-adenosyl-L-methionine = 5-methylaminomethyl-2-thiouridine(34) in tRNA + S-adenosyl-L-homocysteine + H(+). In terms of biological role, catalyzes the last two steps in the biosynthesis of 5-methylaminomethyl-2-thiouridine (mnm(5)s(2)U) at the wobble position (U34) in tRNA. Catalyzes the FAD-dependent demodification of cmnm(5)s(2)U34 to nm(5)s(2)U34, followed by the transfer of a methyl group from S-adenosyl-L-methionine to nm(5)s(2)U34, to form mnm(5)s(2)U34. The polypeptide is tRNA 5-methylaminomethyl-2-thiouridine biosynthesis bifunctional protein MnmC (Marinobacter nauticus (strain ATCC 700491 / DSM 11845 / VT8) (Marinobacter aquaeolei)).